Consider the following 901-residue polypeptide: Protein translocase subunit SecA (901 aa).

Residues Gln87, 105–109 (GEGKT), and Asp512 each bind ATP. The disordered stretch occupies residues 859-901 (HQDDDSAAAAALAAQTGERKVGRNDPCPCGSGKKYKQCHGRLQ). Cys885, Cys887, Cys896, and His897 together coordinate Zn(2+). The span at 891-901 (KKYKQCHGRLQ) shows a compositional bias: basic residues.

This sequence belongs to the SecA family. As to quaternary structure, monomer and homodimer. Part of the essential Sec protein translocation apparatus which comprises SecA, SecYEG and auxiliary proteins SecDF-YajC and YidC. Requires Zn(2+) as cofactor.

The protein resides in the cell inner membrane. The protein localises to the cytoplasm. It catalyses the reaction ATP + H2O + cellular proteinSide 1 = ADP + phosphate + cellular proteinSide 2.. Functionally, part of the Sec protein translocase complex. Interacts with the SecYEG preprotein conducting channel. Has a central role in coupling the hydrolysis of ATP to the transfer of proteins into and across the cell membrane, serving both as a receptor for the preprotein-SecB complex and as an ATP-driven molecular motor driving the stepwise translocation of polypeptide chains across the membrane. The protein is Protein translocase subunit SecA of Escherichia coli O157:H7.